A 333-amino-acid polypeptide reads, in one-letter code: Methylosome protein WDR77 (333 aa).

WD repeat units lie at residues 16 to 59 (CMEV…GAPN), 68 to 106 (QTEAGVTDVAWVSEKGILVASDSGAVELWEILEKESLLV), 113 to 152 (EHDDIVKTLSVFSDGTQAVSGGKDFSVKVWDLSQKAVLKS), 155 to 195 (AHSS…PATR), 199 to 240 (CASD…SAQT), 243 to 283 (VHSQ…VFRD), and 285 to 328 (SHRD…NLIA).

In terms of assembly, heterotetramer; dimer of heterodimer with prmt5. Interacts with histone h2a and h4 and with nucleoplasmin. As to expression, detected in egg (at protein level).

The protein localises to the cytoplasm. Its subcellular location is the nucleus. In terms of biological role, non-catalytic component of the 20S prmt5-containing methyltransferase complex, which modifies specific arginines to dimethylarginines in several spliceosomal Sm proteins and histones. Required for normal prmt5 methyltransferase activity. The chain is Methylosome protein WDR77 from Xenopus laevis (African clawed frog).